The chain runs to 144 residues: Large ribosomal subunit protein uL13 (144 aa).

This sequence belongs to the universal ribosomal protein uL13 family. Part of the 50S ribosomal subunit.

Functionally, this protein is one of the early assembly proteins of the 50S ribosomal subunit, although it is not seen to bind rRNA by itself. It is important during the early stages of 50S assembly. In Mycoplasmopsis pulmonis (strain UAB CTIP) (Mycoplasma pulmonis), this protein is Large ribosomal subunit protein uL13.